We begin with the raw amino-acid sequence, 140 residues long: Bacilliredoxin STH2395 (140 aa).

This sequence belongs to the bacilliredoxin family.

The sequence is that of Bacilliredoxin STH2395 from Symbiobacterium thermophilum (strain DSM 24528 / JCM 14929 / IAM 14863 / T).